Reading from the N-terminus, the 128-residue chain is Cytochrome c-type biogenesis protein CcmE (128 aa).

At 1–8 (MQKRVRNR) the chain is on the cytoplasmic side. A helical; Signal-anchor for type II membrane protein transmembrane segment spans residues 9–29 (LITIIICFCSAFLGIGIILYN). At 30–128 (LENNIVFFLP…KHDENYRPTR (99 aa)) the chain is on the periplasmic side. Positions 120 and 124 each coordinate heme.

The protein belongs to the CcmE/CycJ family.

It is found in the cell inner membrane. Functionally, heme chaperone required for the biogenesis of c-type cytochromes. Transiently binds heme delivered by CcmC and transfers the heme to apo-cytochromes in a process facilitated by CcmF and CcmH. This Rickettsia canadensis (strain McKiel) protein is Cytochrome c-type biogenesis protein CcmE.